The chain runs to 297 residues: MGTALDIKIKRANKVYHAGEVLSGVVVISSKDSVQHQGVSLTMEGTVNLQLSAKSVGVFEAFYNSVKPIQIINSNIEMVKPGKFPSGKTEIPFEFPLHVKGNKVLYETYHGVFVNIQYTLRCDMKRSLLAKDLTKTCEFIVHSAPQKGKFSPSPVHFTITPETLQNARERALLPKFLLRGHLNSTNCVITQPLTGELVVESSEAAIRSVELQLVRVETCGCAEGYARDATEIQNIQIADGDVCRGLSVPIYMVFPRLFTCPTLETTNFKVEFEVNIVVLLHPDHLITENFPLKLCRI.

Belongs to the VPS26 family. As to quaternary structure, component of the commander complex that is essential for endosomal recycling of transmembrane cargos; the commander complex is composed of the CCC subcomplex and the retriever subcomplex. Component of the heterotrimeric retriever complex consisting of VPS26C, VPS29 and VPS35L; within the complex interacts with VPS35L. Interacts with SNX17 (via C-terminus); the interaction is direct and associates SNX17 with the retriever complex. Interacts with SNX31; the interaction is direct.

The protein resides in the endosome. Functionally, component of the commander complex that is essential for endosomal recycling of transmembrane cargos; the commander complex is composed of the CCC subcomplex and the retriever subcomplex. Component of the retriever complex, which is a heterotrimeric complex related to retromer cargo-selective complex (CSC) and essential for retromer-independent retrieval and recycling of numerous cargos such as integrin alpha-5/beta-1 (ITGA5:ITGB1). The recruitment of the retriever complex to the endosomal membrane involves CCC and WASH complexes. In the endosomes, drives the retriever and recycling of NxxY-motif-containing cargo proteins by coupling to SNX17, a cargo essential for the homeostatic maintenance of numerous cell surface proteins associated with processes that include cell migration, cell adhesion, nutrient supply and cell signaling. The polypeptide is Vacuolar protein sorting-associated protein 26C (VPS26C) (Pongo abelii (Sumatran orangutan)).